Here is a 533-residue protein sequence, read N- to C-terminus: Thromboxane-A synthase (533 aa).

Over 1–10 (MEVLGLLKFE) the chain is Cytoplasmic. Residues 11-31 (VSGTIVTVTLLVALLALLKWY) traverse the membrane as a helical segment. Residues 32 to 75 (SMSAFSRLEKLGIRHPKPSPFVGNLMFFRQGFWESQLELRERYG) lie on the Lumenal side of the membrane. The chain crosses the membrane as a helical span at residues 76–96 (PLCGYYLGRRMHVVISEPDMI). The Cytoplasmic portion of the chain corresponds to 97-223 (KQVLVENFSN…RRASTFCIPR (127 aa)). A helical membrane pass occupies residues 224–244 (PLLVLILSFPSIMVPLARILP). Over 245 to 335 (NKNRDELNGF…FTVDEIVGQA (91 aa)) the chain is Lumenal. The chain crosses the membrane as a helical span at residues 336-356 (FLFLIAGHEVITNTLSFITYL). Topologically, residues 357-533 (LATHPDCQER…NGVYIKIVSR (177 aa)) are cytoplasmic. Cys479 contributes to the heme binding site.

This sequence belongs to the cytochrome P450 family. As to quaternary structure, monomer. Heme serves as cofactor. In terms of tissue distribution, expressed primarily in lung, kidney, and spleen.

The protein localises to the endoplasmic reticulum membrane. The catalysed reaction is prostaglandin H2 = thromboxane A2. It carries out the reaction prostaglandin H2 = (12S)-hydroxy-(5Z,8E,10E)-heptadecatrienoate + malonaldehyde. The enzyme catalyses a hydroperoxyeicosatetraenoate = an oxoeicosatetraenoate + H2O. It catalyses the reaction (15S)-hydroperoxy-(5Z,8Z,11Z,13E)-eicosatetraenoate = 15-oxo-(5Z,8Z,11Z,13E)-eicosatetraenoate + H2O. The catalysed reaction is (15S)-hydroperoxy-(5Z,8Z,11Z,13E)-eicosatetraenoate + AH2 = (15S)-hydroxy-(5Z,8Z,11Z,13E)-eicosatetraenoate + A + H2O. In terms of biological role, catalyzes the conversion of prostaglandin H2 (PGH2) to thromboxane A2 (TXA2), a potent inducer of blood vessel constriction and platelet aggregation. Also cleaves PGH2 to 12-hydroxy-heptadecatrienoicacid (12-HHT) and malondialdehyde, which is known to act as a mediator of DNA damage. 12-HHT and malondialdehyde are formed stoichiometrically in the same amounts as TXA2. Additionally, displays dehydratase activity, toward (15S)-hydroperoxy-(5Z,8Z,11Z,13E)-eicosatetraenoate (15(S)-HPETE) producing 15-KETE and 15-HETE. In Mus musculus (Mouse), this protein is Thromboxane-A synthase (Tbxas1).